The sequence spans 477 residues: PTS system glucose-specific EIICB component (477 aa).

At 1–14 the chain is on the cytoplasmic side; it reads MFKNAFANLQKVGK. The PTS EIIC type-1 domain occupies 1–388; sequence MFKNAFANLQ…LDLKTPGRED (388 aa). A helical membrane pass occupies residues 15-35; sequence SLMLPVSVLPIAGILLGVGSA. Residues 36–50 lie on the Periplasmic side of the membrane; the sequence is NFSWLPAVVSHVMAE. The helical transmembrane segment at 51-71 threads the bilayer; the sequence is AGGSVFANMPLIFAIGVALGF. The Cytoplasmic portion of the chain corresponds to 72–79; that stretch reads TNNDGVSA. A helical transmembrane segment spans residues 80 to 100; the sequence is LAAVVAYGIMVKTMAVVAPLV. The Periplasmic portion of the chain corresponds to 101–111; sequence LHLPAEEIASK. The helical transmembrane segment at 112–132 threads the bilayer; the sequence is HLADTGVLGGIISGAIAAYMF. At 133–151 the chain is on the cytoplasmic side; sequence NRFYRIKLPEYLGFFAGKR. The helical transmembrane segment at 152-172 threads the bilayer; the sequence is FVPIISGLAAIFTGVVLSFIW. Residues 173 to 190 lie on the Periplasmic side of the membrane; that stretch reads PPIGSAIQTFSQWAAYQN. Residues 191–211 form a helical membrane-spanning segment; sequence PVVAFGIYGFIERCLVPFGLH. The Cytoplasmic segment spans residues 212 to 249; it reads HIWNVPFQMQIGEYTNAAGQVFHGDIPRYMAGDPTAGK. A helical membrane pass occupies residues 250-270; that stretch reads LSGGFLFKMYGLPAAAIAIWH. The Periplasmic segment spans residues 271–279; it reads SAKPENRAK. The helical transmembrane segment at 280–300 threads the bilayer; it reads VGGIMISAALTSFLTGITEPI. The Cytoplasmic portion of the chain corresponds to 301–309; the sequence is EFSFMFVAP. The helical transmembrane segment at 310–330 threads the bilayer; the sequence is ILYIIHAILAGLAFPICILLG. Residues 331–355 lie on the Periplasmic side of the membrane; it reads MRDGTSFSHGLIDFIVLSGNSSKLW. Residues 356–376 form a helical membrane-spanning segment; that stretch reads LFPIVGIGYAIVYYTIFRVLI. The Cytoplasmic portion of the chain corresponds to 377 to 477; that stretch reads KALDLKTPGR…TEMDEYIRNH (101 aa). The 79-residue stretch at 399–477 folds into the PTS EIIB type-1 domain; sequence SEMAPALVAA…TEMDEYIRNH (79 aa). The Phosphocysteinsyse intermediate; for EIIB activity role is filled by C421. C421 bears the Phosphocysteine mark.

The protein localises to the cell inner membrane. It carries out the reaction N(pros)-phospho-L-histidyl-[protein] + D-glucose(out) = D-glucose 6-phosphate(in) + L-histidyl-[protein]. In terms of biological role, the phosphoenolpyruvate-dependent sugar phosphotransferase system (sugar PTS), a major carbohydrate active transport system, catalyzes the phosphorylation of incoming sugar substrates concomitantly with their translocation across the cell membrane. The enzyme II complex composed of PtsG and Crr is involved in glucose transport. Also functions as a chemoreceptor monitoring the environment for changes in sugar concentration. This Escherichia coli O6:H1 (strain CFT073 / ATCC 700928 / UPEC) protein is PTS system glucose-specific EIICB component (ptsG).